The sequence spans 231 residues: Putative aminodeoxychorismate lyase (231 aa).

It belongs to the class-IV pyridoxal-phosphate-dependent aminotransferase family. Pyridoxal 5'-phosphate is required as a cofactor.

Its subcellular location is the cytoplasm. It is found in the nucleus. It catalyses the reaction 4-amino-4-deoxychorismate = 4-aminobenzoate + pyruvate + H(+). It participates in cofactor biosynthesis; tetrahydrofolate biosynthesis; 4-aminobenzoate from chorismate: step 2/2. In terms of biological role, converts 4-amino-4-deoxychorismate into 4-aminobenzoate (PABA) and pyruvate. The sequence is that of Putative aminodeoxychorismate lyase from Schizosaccharomyces pombe (strain 972 / ATCC 24843) (Fission yeast).